The primary structure comprises 709 residues: Fatty acid oxidation complex subunit alpha (709 aa).

The tract at residues Met1 to Pro188 is enoyl-CoA hydratase. The tract at residues Arg308–Phe709 is 3-hydroxyacyl-CoA dehydrogenase.

The protein in the N-terminal section; belongs to the enoyl-CoA hydratase/isomerase family. In the central section; belongs to the 3-hydroxyacyl-CoA dehydrogenase family. Heterotetramer of two alpha chains (FadJ) and two beta chains (FadI).

It is found in the cytoplasm. The enzyme catalyses a (3S)-3-hydroxyacyl-CoA = a (2E)-enoyl-CoA + H2O. It carries out the reaction a 4-saturated-(3S)-3-hydroxyacyl-CoA = a (3E)-enoyl-CoA + H2O. The catalysed reaction is a (3S)-3-hydroxyacyl-CoA + NAD(+) = a 3-oxoacyl-CoA + NADH + H(+). It catalyses the reaction (3S)-3-hydroxybutanoyl-CoA = (3R)-3-hydroxybutanoyl-CoA. It functions in the pathway lipid metabolism; fatty acid beta-oxidation. Its function is as follows. Catalyzes the formation of a hydroxyacyl-CoA by addition of water on enoyl-CoA. Also exhibits 3-hydroxyacyl-CoA epimerase and 3-hydroxyacyl-CoA dehydrogenase activities. In Shewanella sp. (strain ANA-3), this protein is Fatty acid oxidation complex subunit alpha.